We begin with the raw amino-acid sequence, 305 residues long: Superoxide dismutase [Fe] 2, chloroplastic (305 aa).

A chloroplast-targeting transit peptide spans 1–46 (MMNVAVTATPSSLLYSPLLLPSQGPNRRMQWKRNGKRRLGTKVAVS). Fe cation-binding residues include His77, His129, Asp228, and His232. A disordered region spans residues 270–305 (AVQREQEGTETEDEENPDDEVPEVYLDSDIDVSEVD). The span at 277–305 (GTETEDEENPDDEVPEVYLDSDIDVSEVD) shows a compositional bias: acidic residues.

Belongs to the iron/manganese superoxide dismutase family. Heterodimer with FSD3. Interacts with MRL7 and PRDA1. The cofactor is Fe cation.

It localises to the plastid. The protein resides in the chloroplast thylakoid. It carries out the reaction 2 superoxide + 2 H(+) = H2O2 + O2. With respect to regulation, activated by cpn20/cpn21 (in vitro). In terms of biological role, destroys superoxide anion radicals which are normally produced within the cells and which are toxic to biological systems. Plays important role in chloroplast development, particularly in the maintenance of thylakoids membranes. Seems to act as a heterodimer with FSD3. This chain is Superoxide dismutase [Fe] 2, chloroplastic (FSD2), found in Arabidopsis thaliana (Mouse-ear cress).